A 219-amino-acid chain; its full sequence is Proteasome subunit beta (219 aa).

The propeptide at Met1 to Gly14 is removed in mature form; by autocatalysis. The active-site Nucleophile is Thr15.

It belongs to the peptidase T1B family. As to quaternary structure, the 20S proteasome core is composed of 14 alpha and 14 beta subunits that assemble into four stacked heptameric rings, resulting in a barrel-shaped structure. The two inner rings, each composed of seven catalytic beta subunits, are sandwiched by two outer rings, each composed of seven alpha subunits. The catalytic chamber with the active sites is on the inside of the barrel. Has a gated structure, the ends of the cylinder being occluded by the N-termini of the alpha-subunits. Is capped at one or both ends by the proteasome regulatory ATPase, PAN.

The protein localises to the cytoplasm. The catalysed reaction is Cleavage of peptide bonds with very broad specificity.. The formation of the proteasomal ATPase PAN-20S proteasome complex, via the docking of the C-termini of PAN into the intersubunit pockets in the alpha-rings, triggers opening of the gate for substrate entry. Interconversion between the open-gate and close-gate conformations leads to a dynamic regulation of the 20S proteasome proteolysis activity. In terms of biological role, component of the proteasome core, a large protease complex with broad specificity involved in protein degradation. The polypeptide is Proteasome subunit beta (Methanococcus vannielii (strain ATCC 35089 / DSM 1224 / JCM 13029 / OCM 148 / SB)).